Consider the following 456-residue polypeptide: tRNA modification GTPase MnmE (456 aa).

Residues Arg-23, Glu-85, and Arg-124 each coordinate (6S)-5-formyl-5,6,7,8-tetrahydrofolate. The TrmE-type G domain maps to 220–375 (GLRVLIFGKP…LVSAIQERFV (156 aa)). K(+) is bound at residue Asn-230. GTP-binding positions include 230 to 235 (NVGKSS), 249 to 255 (TDIPGTT), and 274 to 277 (DTAG). Ser-234 lines the Mg(2+) pocket. 3 residues coordinate K(+): Thr-249, Ile-251, and Thr-254. Thr-255 contacts Mg(2+). (6S)-5-formyl-5,6,7,8-tetrahydrofolate is bound at residue Lys-456.

It belongs to the TRAFAC class TrmE-Era-EngA-EngB-Septin-like GTPase superfamily. TrmE GTPase family. Homodimer. Heterotetramer of two MnmE and two MnmG subunits. Requires K(+) as cofactor.

The protein localises to the cytoplasm. Exhibits a very high intrinsic GTPase hydrolysis rate. Involved in the addition of a carboxymethylaminomethyl (cmnm) group at the wobble position (U34) of certain tRNAs, forming tRNA-cmnm(5)s(2)U34. The sequence is that of tRNA modification GTPase MnmE from Syntrophotalea carbinolica (strain DSM 2380 / NBRC 103641 / GraBd1) (Pelobacter carbinolicus).